The sequence spans 339 residues: Trace amine-associated receptor 2 (339 aa).

At Met1–Ser36 the chain is on the extracellular side. A glycan (N-linked (GlcNAc...) asparagine) is linked at Asn18. Disulfide bonds link Cys21–Cys185 and Cys104–Cys189. A helical transmembrane segment spans residues Leu37–Ser57. At Tyr58–Asn67 the chain is on the cytoplasmic side. The helical transmembrane segment at Leu68 to Ser88 threads the bilayer. The Extracellular portion of the chain corresponds to Met89–Ile106. The chain crosses the membrane as a helical span at residues His107–Ile127. Residues Asp128 to Arg150 lie on the Cytoplasmic side of the membrane. A helical transmembrane segment spans residues Leu151–Ala171. Topologically, residues Tyr172–Lys195 are extracellular. A helical membrane pass occupies residues Leu196–Ile216. Residues Tyr217–Thr251 are Cytoplasmic-facing. The chain crosses the membrane as a helical span at residues Leu252 to Leu272. Over Asp273–Ala287 the chain is Extracellular. Asn277 carries N-linked (GlcNAc...) asparagine glycosylation. The chain crosses the membrane as a helical span at residues Leu288–Phe310. Over Arg311–Glu339 the chain is Cytoplasmic.

This sequence belongs to the G-protein coupled receptor 1 family.

It localises to the cell membrane. Its function is as follows. Orphan olfactory receptor specific for trace amines. Trace amine compounds are enriched in animal body fluids and act on trace amine-associated receptors (TAARs) to elicit both intraspecific and interspecific innate behaviors. Ligand-binding causes a conformation change that triggers signaling via the G(s)-class of G-proteins which activate adenylate cyclase. May also be required to provide olfactory input into limbic brain areas to regulate emotional behaviors likely via modulation of the dopamine system. The polypeptide is Trace amine-associated receptor 2 (Taar2) (Rattus norvegicus (Rat)).